The following is an 89-amino-acid chain: Small ribosomal subunit protein uS15 (89 aa).

This sequence belongs to the universal ribosomal protein uS15 family. As to quaternary structure, part of the 30S ribosomal subunit. Forms a bridge to the 50S subunit in the 70S ribosome, contacting the 23S rRNA.

Functionally, one of the primary rRNA binding proteins, it binds directly to 16S rRNA where it helps nucleate assembly of the platform of the 30S subunit by binding and bridging several RNA helices of the 16S rRNA. Its function is as follows. Forms an intersubunit bridge (bridge B4) with the 23S rRNA of the 50S subunit in the ribosome. The chain is Small ribosomal subunit protein uS15 from Frankia alni (strain DSM 45986 / CECT 9034 / ACN14a).